The sequence spans 145 residues: Ribonuclease H (145 aa).

The 142-residue stretch at 1–142 (MKEVVIYTDG…CDEIARSMIK (142 aa)) folds into the RNase H type-1 domain. Asp9, Glu47, Asp69, and Asp134 together coordinate Mg(2+).

The protein belongs to the RNase H family. As to quaternary structure, monomer. The cofactor is Mg(2+).

It is found in the cytoplasm. The enzyme catalyses Endonucleolytic cleavage to 5'-phosphomonoester.. In terms of biological role, endonuclease that specifically degrades the RNA of RNA-DNA hybrids. This chain is Ribonuclease H, found in Caldicellulosiruptor saccharolyticus (strain ATCC 43494 / DSM 8903 / Tp8T 6331).